A 168-amino-acid chain; its full sequence is MNWMDIRIGQGYDVHALVEGRKLILGGVEIPHTRGLLGHSDADALLHAITDALFGAAGLGDIGRHFPDTDPAFAGADSRVLLREAVRRVREAGYDVGNVDATVIAQKPKLAPHVPGMVANLAADLGIAPGRCNVKAKTNEKLGFEGREDGIVAQAAVLIYRAEAAEQD.

Residues D13 and H15 each contribute to the a divalent metal cation site. 4-CDP-2-C-methyl-D-erythritol 2-phosphate contacts are provided by residues 13–15 (DVH) and 39–40 (HS). Position 47 (H47) interacts with a divalent metal cation. Residues 61–63 (DIG), 66–70 (FPDTD), F144, and R147 each bind 4-CDP-2-C-methyl-D-erythritol 2-phosphate.

This sequence belongs to the IspF family. As to quaternary structure, homotrimer. A divalent metal cation is required as a cofactor.

It catalyses the reaction 4-CDP-2-C-methyl-D-erythritol 2-phosphate = 2-C-methyl-D-erythritol 2,4-cyclic diphosphate + CMP. Its pathway is isoprenoid biosynthesis; isopentenyl diphosphate biosynthesis via DXP pathway; isopentenyl diphosphate from 1-deoxy-D-xylulose 5-phosphate: step 4/6. Involved in the biosynthesis of isopentenyl diphosphate (IPP) and dimethylallyl diphosphate (DMAPP), two major building blocks of isoprenoid compounds. Catalyzes the conversion of 4-diphosphocytidyl-2-C-methyl-D-erythritol 2-phosphate (CDP-ME2P) to 2-C-methyl-D-erythritol 2,4-cyclodiphosphate (ME-CPP) with a corresponding release of cytidine 5-monophosphate (CMP). The sequence is that of 2-C-methyl-D-erythritol 2,4-cyclodiphosphate synthase from Ralstonia nicotianae (strain ATCC BAA-1114 / GMI1000) (Ralstonia solanacearum).